Consider the following 282-residue polypeptide: Biotin synthase (282 aa).

Residues 1–228 (MQEIFLCSIS…NARLMAAGGR (228 aa)) enclose the Radical SAM core domain. 3 residues coordinate [4Fe-4S] cluster: cysteine 17, cysteine 21, and cysteine 24. [2Fe-2S] cluster contacts are provided by cysteine 61, cysteine 96, cysteine 154, and arginine 221.

It belongs to the radical SAM superfamily. Biotin synthase family. Homodimer. [4Fe-4S] cluster serves as cofactor. It depends on [2Fe-2S] cluster as a cofactor.

It carries out the reaction (4R,5S)-dethiobiotin + (sulfur carrier)-SH + 2 reduced [2Fe-2S]-[ferredoxin] + 2 S-adenosyl-L-methionine = (sulfur carrier)-H + biotin + 2 5'-deoxyadenosine + 2 L-methionine + 2 oxidized [2Fe-2S]-[ferredoxin]. It participates in cofactor biosynthesis; biotin biosynthesis; biotin from 7,8-diaminononanoate: step 2/2. Its function is as follows. Catalyzes the conversion of dethiobiotin (DTB) to biotin by the insertion of a sulfur atom into dethiobiotin via a radical-based mechanism. This chain is Biotin synthase, found in Helicobacter acinonychis (strain Sheeba).